The sequence spans 704 residues: Myb-related protein B (704 aa).

HTH myb-type domains lie at R26–L77, N78–V133, and K134–V184. The H-T-H motif DNA-binding region spans W54–L77. A Glycyl lysine isopeptide (Lys-Gly) (interchain with G-Cter in SUMO2) cross-link involves residue K104. DNA-binding regions (H-T-H motif) lie at residues W106–L129 and W157–I180. A Glycyl lysine isopeptide (Lys-Gly) (interchain with G-Cter in SUMO2) cross-link involves residue K197. T267 carries the post-translational modification Phosphothreonine. K275 participates in a covalent cross-link: Glycyl lysine isopeptide (Lys-Gly) (interchain with G-Cter in SUMO2). At S282 the chain carries Phosphoserine. The interval L325–V412 is disordered. The segment covering S339–T366 has biased composition (low complexity). At S396 the chain carries Phosphoserine. K414 is covalently cross-linked (Glycyl lysine isopeptide (Lys-Gly) (interchain with G-Cter in SUMO2)). Residues T443 and T447 each carry the phosphothreonine; by CDK2 modification. Residues K450 and K485 each participate in a glycyl lysine isopeptide (Lys-Gly) (interchain with G-Cter in SUMO2) cross-link. Phosphothreonine; by CDK2 is present on residues T490 and T497. Residues K502 and K513 each participate in a glycyl lysine isopeptide (Lys-Gly) (interchain with G-Cter in SUMO2) cross-link. T524 is modified (phosphothreonine; by CDK2). Residues K527, K537, and K550 each participate in a glycyl lysine isopeptide (Lys-Gly) (interchain with G-Cter in SUMO2) cross-link. Residue S581 is modified to Phosphoserine; by CDK2. Glycyl lysine isopeptide (Lys-Gly) (interchain with G-Cter in SUMO2) cross-links involve residues K588 and K600. Positions S603–P626 are disordered. Low complexity predominate over residues P607–S620. Residues K629, K643, and K652 each participate in a glycyl lysine isopeptide (Lys-Gly) (interchain with G-Cter in SUMO2) cross-link.

In terms of assembly, component of the DREAM complex (also named LINC complex) at least composed of E2F4, E2F5, LIN9, LIN37, LIN52, LIN54, MYBL1, MYBL2, RBL1, RBL2, RBBP4, TFDP1 and TFDP2. The complex exists in quiescent cells where it represses cell cycle-dependent genes. It dissociates in S phase when LIN9, LIN37, LIN52 and LIN54 form a subcomplex that binds to MYBL2. Interacts with CCNF (via the Cyclin N-terminal domain). In terms of processing, phosphorylated by cyclin A/CDK2 during S-phase. Phosphorylation at Thr-524 is probably involved in transcriptional activity.

Its subcellular location is the nucleus. In terms of biological role, transcription factor involved in the regulation of cell survival, proliferation, and differentiation. Transactivates the expression of the CLU gene. The sequence is that of Myb-related protein B (Mybl2) from Mus musculus (Mouse).